We begin with the raw amino-acid sequence, 621 residues long: uncharacterized protein (621 aa).

The first 15 residues, 1-15 (MRRSVCYVTPSVARA), serve as a signal peptide directing secretion.

It belongs to the chlamydial CPn_0512/CT_425/TC_0708 family.

This is an uncharacterized protein from Chlamydia trachomatis serovar D (strain ATCC VR-885 / DSM 19411 / UW-3/Cx).